The primary structure comprises 1856 residues: Autophagy-related protein 2 (1856 aa).

7 disordered regions span residues 123–167 (NTND…TGNK), 229–283 (LRTL…GNES), 309–328 (KSAA…DKED), 395–428 (TKSR…DASH), 1157–1177 (LNGT…SSLM), 1614–1647 (MLGG…VEVA), and 1719–1741 (KLQP…EDED). Positions 137-147 (ASEDDDEDDID) are enriched in acidic residues. Positions 250-262 (KKQQGSDNDSPTD) are enriched in polar residues. Positions 270–280 (NDNDDDDDDYG) are enriched in acidic residues. Residues 412 to 424 (DNDEIPEDQSESD) show a composition bias toward acidic residues. Over residues 1157–1170 (LNGTENGSTSESSS) the composition is skewed to low complexity. The span at 1621 to 1639 (SVRSPNLGGSDNRRNSNAS) shows a compositional bias: polar residues. Over residues 1732 to 1741 (TEEEEDEDED) the composition is skewed to acidic residues.

This sequence belongs to the ATG2 family.

It is found in the preautophagosomal structure membrane. The protein localises to the endoplasmic reticulum membrane. It carries out the reaction a 1,2-diacyl-sn-glycero-3-phosphocholine(in) = a 1,2-diacyl-sn-glycero-3-phosphocholine(out). It catalyses the reaction a 1,2-diacyl-sn-glycero-3-phospho-L-serine(in) = a 1,2-diacyl-sn-glycero-3-phospho-L-serine(out). The catalysed reaction is a 1,2-diacyl-sn-glycero-3-phosphoethanolamine(in) = a 1,2-diacyl-sn-glycero-3-phosphoethanolamine(out). In terms of biological role, lipid transfer protein required for autophagosome completion and peroxisome degradation. Tethers the edge of the isolation membrane (IM) to the endoplasmic reticulum (ER) and mediates direct lipid transfer from ER to IM for IM expansion. ATG2/SPO72 binds to the ER exit site (ERES), which is the membrane source for autophagosome formation, using basic residues in its N-terminal region (NR) and to the expanding edge of the IM through its C-terminal region. The latter binding is assisted by an ATG18-PtdIns3P interaction. ATG2/SPO72 then extracts phospholipids from the membrane source using its NR and transfers them to ATG9 to the IM through its predicted beta-sheet-rich structure for membrane expansion. The chain is Autophagy-related protein 2 (SPO72) from Candida albicans (strain SC5314 / ATCC MYA-2876) (Yeast).